Reading from the N-terminus, the 208-residue chain is Protein GrpE (208 aa).

Positions 1–25 (MVDNKDFNEELKENIQEELDNETKA) are enriched in basic and acidic residues. Positions 1 to 38 (MVDNKDFNEELKENIQEELDNETKAENPNIDEEVEEVS) are disordered. Residues 29-38 (NIDEEVEEVS) are compositionally biased toward acidic residues.

This sequence belongs to the GrpE family. As to quaternary structure, homodimer.

The protein resides in the cytoplasm. Its function is as follows. Participates actively in the response to hyperosmotic and heat shock by preventing the aggregation of stress-denatured proteins, in association with DnaK and GrpE. It is the nucleotide exchange factor for DnaK and may function as a thermosensor. Unfolded proteins bind initially to DnaJ; upon interaction with the DnaJ-bound protein, DnaK hydrolyzes its bound ATP, resulting in the formation of a stable complex. GrpE releases ADP from DnaK; ATP binding to DnaK triggers the release of the substrate protein, thus completing the reaction cycle. Several rounds of ATP-dependent interactions between DnaJ, DnaK and GrpE are required for fully efficient folding. The chain is Protein GrpE from Clostridium perfringens (strain 13 / Type A).